The following is a 25-amino-acid chain: Small ribosomal subunit protein eS32 eS32z/eS32y/eS32x/eS32w/eS32v (25 aa).

The disordered stretch occupies residues 1-25 (MRAKWKKKRMRRLKRKRRKMRQRSK).

It belongs to the eukaryotic ribosomal protein eS32 family. Component of the small ribosomal subunit (SSU).

The sequence is that of Small ribosomal subunit protein eS32 eS32z/eS32y/eS32x/eS32w/eS32v (RPL41A) from Arabidopsis thaliana (Mouse-ear cress).